Reading from the N-terminus, the 799-residue chain is Potassium transporter 21 (799 aa).

The Cytoplasmic segment spans residues 1–56 (MDPGVEKKKQQMELVDVESGGLPVERQDSLFREAVRAEHAGAAHWDEQDSWGRTMS). The helical transmembrane segment at 57-77 (LAFQCVGILYGDIGTSSLYVY) threads the bilayer. The Extracellular portion of the chain corresponds to 78–93 (SSTFEHGIGHPDDVVG). Residues 94 to 114 (VLSLIVYSFMLFTVIKIVFVA) traverse the membrane as a helical segment. The Cytoplasmic segment spans residues 115–181 (LHANDHGDGG…QLLEASKAAK (67 aa)). A helical membrane pass occupies residues 182–202 (ISLFLLTILAIAMVISDAVLT). Topologically, residues 203–219 (PPISVLSAVGGLREKVP) are extracellular. The helical transmembrane segment at 220 to 240 (HLTTDQIVWITVAILVVLFAI) threads the bilayer. Over 241–251 (QRYGTDKVGYS) the chain is Cytoplasmic. The chain crosses the membrane as a helical span at residues 252–272 (FAPIILLWLLLIGATGLYNLI). Topologically, residues 273 to 301 (KHDISVLRAFNPKYIIDYFRRNKKEGWVS) are extracellular. Residues 302–322 (LGSILLCFTGSEALFANLGYF) form a helical membrane-spanning segment. Residues 323–328 (SIRSIQ) are Cytoplasmic-facing. A helical transmembrane segment spans residues 329-349 (LSFSFALLPSVLLTYIGQAAF). The Extracellular segment spans residues 350-362 (LSKNPKNVANTFF). The chain crosses the membrane as a helical span at residues 363 to 383 (AATPISLFWPTFIMAIAASII). The Cytoplasmic segment spans residues 384–420 (GSQAMISCAFATVSHLQSLSCFPRVKILHTSKRFPGQ). The chain crosses the membrane as a helical span at residues 421–441 (LYIPGVNFLLCVAACVVTVSF). Topologically, residues 442–452 (KTTVIIGKAHE) are extracellular. Residues 453-473 (ICVILVMIITTLLMTIVMLLV) traverse the membrane as a helical segment. The Cytoplasmic segment spans residues 474-475 (WK). Residues 476 to 496 (INILWVALFFITFTSTEAVYL) form a helical membrane-spanning segment. Over 497-508 (SSVLYKFTHGPY) the chain is Extracellular. Residues 509 to 529 (VPVAMSVVLMVVMIVWHYVHV) traverse the membrane as a helical segment. At 530–799 (KRYKYELEHT…LLKVGISYEI (270 aa)) the chain is on the cytoplasmic side.

It belongs to the HAK/KUP transporter (TC 2.A.72.3) family.

The protein resides in the membrane. Functionally, high-affinity potassium transporter. This chain is Potassium transporter 21 (HAK21), found in Oryza sativa subsp. japonica (Rice).